The following is a 488-amino-acid chain: 1-hydroxycarotenoid 3,4-desaturase (488 aa).

FAD is bound by residues Glu-31, Lys-39, 55–56 (SL), Val-247, Asn-275, Leu-431, Gly-461, and 468–469 (GI).

The protein belongs to the carotenoid/retinoid oxidoreductase family. Monomer.

It carries out the reaction rhodopin + A = (3E)-3,4-didehydrorhodopin + AH2. The enzyme catalyses 1'-hydroxy-gamma-carotene + A = 1'-hydroxytorulene + AH2. It catalyses the reaction 1-hydroxy-all-trans-1,2-dihydro-neurosporene + A = demethylspheroidene + AH2. The catalysed reaction is 1,1'-dihydroxy-1,1',2,2'-tetrahydroneurosporene + A = 1'-hydroxy-demethylspheroidene + AH2. It carries out the reaction 1,1'-dihydroxy-1,1',2,2'-tetrahydrolycopene + A = 1,1'-dihydroxy-3,4-didehydro-1,2-dihydrolycopene + AH2. It functions in the pathway carotenoid biosynthesis. In terms of biological role, catalyzes the introduction of a C-3,4 double bond into 1'-hydroxy-gamma-carotene and rhodopin (1-hydroxylycopene) to yield 1'-hydroxytorulene and (3E)-3,4-didehydrorhodopin, respectively. Can also 1-hydroxy-all-trans-1,2-dihydro-neurosporene, 1,1'-dihydroxy-1,1',2,2'-tetrahydroneurosporene and 1,1'-dihydroxy-1,1',2,2'-tetrahydrolycopene. Probably involved in the synthesis of myxol, a gamma-carotene derivative. May use FAD as a proton acceptor. This chain is 1-hydroxycarotenoid 3,4-desaturase, found in Flavobacterium sp. (strain P99-3).